Reading from the N-terminus, the 309-residue chain is NAD kinase (309 aa).

Catalysis depends on aspartate 89, which acts as the Proton acceptor. NAD(+) contacts are provided by residues 89-90 (DG), 163-164 (NE), arginine 191, aspartate 193, and 204-209 (TAYSLS).

This sequence belongs to the NAD kinase family. The cofactor is a divalent metal cation.

The protein resides in the cytoplasm. It carries out the reaction NAD(+) + ATP = ADP + NADP(+) + H(+). Its function is as follows. Involved in the regulation of the intracellular balance of NAD and NADP, and is a key enzyme in the biosynthesis of NADP. Catalyzes specifically the phosphorylation on 2'-hydroxyl of the adenosine moiety of NAD to yield NADP. In Shewanella halifaxensis (strain HAW-EB4), this protein is NAD kinase.